The sequence spans 221 residues: Endonuclease V (221 aa).

Residues aspartate 44 and aspartate 112 each contribute to the Mg(2+) site.

It belongs to the endonuclease V family. It depends on Mg(2+) as a cofactor.

It is found in the cytoplasm. The catalysed reaction is Endonucleolytic cleavage at apurinic or apyrimidinic sites to products with a 5'-phosphate.. Its function is as follows. DNA repair enzyme involved in the repair of deaminated bases. Selectively cleaves double-stranded DNA at the second phosphodiester bond 3' to a deoxyinosine leaving behind the intact lesion on the nicked DNA. This is Endonuclease V from Nostoc sp. (strain PCC 7120 / SAG 25.82 / UTEX 2576).